We begin with the raw amino-acid sequence, 898 residues long: Transportin-1 (898 aa).

20 HEAT repeats span residues 19-46 (GLQQILQLLKESQSPDTTIQRTVQQKLE), 51-89 (YPDFNNYLIFVLTKLKSEDEPTRSLSGLILKNNVKAHFQ), 98-131 (FIKSECLNNIGDSSPLIRATVGILITTIASKGEL), 137-174 (LLPKLCSLLDSEDYNTCEGAFGALQKICEDSAEILDSD), 181-211 (NIMIPKFLQFFKHSSPKIRSHAVACVNQFII), 224-251 (FIENLFALAGDEEAEVRKNVCRALVMLL), 263-290 (HNIVEYMLQRTQDQDENVALEACEFWLT), 306-397 (PKLI…LANV), 405-433 (HILPLLKELLFHHEWVVKESGILVLGAIA), 445-472 (PELIPHLIQCLSDKKALVRSITCWTLSR), 486-519 (LKPLMTELLKRILDSNKRVQEAACSAFATLEEEA), 527-560 (LAYILDTLVFAFSKYQHKNLLILYDAIGTLADSV), 568-606 (EYIQMLMPPLIQKWNMLKDEDKDLFPLLECLSSVATALQ), 614-665 (EPVY…GLGG), 676-707 (ILTLMYQCMQDKMPEVRQSSFALLGDLTKACF), 715-748 (ADFMPILGTNLNPEFISVCNNATWAIGEISIQMG), 756-791 (PMVLHQLVEIINRPNTPKTLLENTAITIGRLGYVCP), 799-832 (QQFIRPWCTSLRNIRDNEEKDSAFRGICTMISVN), 841-872 (IFFCDAVASWINPKDDLRDMFCKILHGFKNQV), and 875-895 (ENWRRFSDQFPLPLKERLAAF). The region spanning 41 to 109 (VQQKLEQLNQ…KSECLNNIGD (69 aa)) is the Importin N-terminal domain. Residues 347–374 (FHRSRTVAQQHEEDGIEEEDDDDDEIDD) are disordered. Positions 360–374 (DGIEEEDDDDDEIDD) are enriched in acidic residues.

Belongs to the importin beta family. Importin beta-2 subfamily. In terms of assembly, identified in a complex that contains TNPO1, RAN and RANBP1. Binds HNRPA1, HNRPA2, HNRNPDL, RPS7, RPL5 and RAN. Interacts with H2A, H2B, H3 and H4 histones. Interacts with isoform 1 and isoform 5 of ADAR/ADAR1 (via DRBM 3 domain). Interacts with SNAI1 (via zinc fingers); the interaction mediates SNAI1 nuclear import. Interacts with SNAI2 (via zinc fingers). Interacts with RPL23A (via BIB domain) and SRP19; this interaction is involved in RPL23A and SRP19 import into the nucleus. Interacts (via HEAT repeats 8-12) with BAP1 (via non-classical PY-NLS); this interaction is direct, is involved in BAP1 nuclear import and disrupts BAP1 homodimerization.

It is found in the cytoplasm. The protein localises to the nucleus. In terms of biological role, functions in nuclear protein import as nuclear transport receptor. Serves as receptor for nuclear localization signals (NLS) in cargo substrates. May mediate docking of the importin/substrate complex to the nuclear pore complex (NPC) through binding to nucleoporin and the complex is subsequently translocated through the pore by an energy requiring, Ran-dependent mechanism. At the nucleoplasmic side of the NPC, Ran binds to the importin, the importin/substrate complex dissociates and importin is re-exported from the nucleus to the cytoplasm where GTP hydrolysis releases Ran. The directionality of nuclear import is thought to be conferred by an asymmetric distribution of the GTP- and GDP-bound forms of Ran between the cytoplasm and nucleus. Involved in nuclear import of M9-containing proteins. In vitro, binds directly to the M9 region of the heterogeneous nuclear ribonucleoproteins (hnRNP), A1 and A2 and mediates their nuclear import. Involved in hnRNP A1/A2 nuclear export. Mediates the nuclear import of ribosomal proteins RPL23A, RPS7 and RPL5. In vitro, mediates nuclear import of SRP19. Mediates the import of histones H2A, H2B, H3 and H4. Mediates nuclear import of ADAR/ADAR1 in a RanGTP-dependent manner. Main mediator of PR-DUB complex component BAP1 nuclear import; acts redundantly with the karyopherins KPNA1 and KPNA2. In Mus musculus (Mouse), this protein is Transportin-1 (Tnpo1).